Reading from the N-terminus, the 445-residue chain is Probable glycine dehydrogenase (decarboxylating) subunit 1 (445 aa).

It belongs to the GcvP family. N-terminal subunit subfamily. The glycine cleavage system is composed of four proteins: P, T, L and H. In this organism, the P 'protein' is a heterodimer of two subunits.

The catalysed reaction is N(6)-[(R)-lipoyl]-L-lysyl-[glycine-cleavage complex H protein] + glycine + H(+) = N(6)-[(R)-S(8)-aminomethyldihydrolipoyl]-L-lysyl-[glycine-cleavage complex H protein] + CO2. The glycine cleavage system catalyzes the degradation of glycine. The P protein binds the alpha-amino group of glycine through its pyridoxal phosphate cofactor; CO(2) is released and the remaining methylamine moiety is then transferred to the lipoamide cofactor of the H protein. This is Probable glycine dehydrogenase (decarboxylating) subunit 1 from Anaeromyxobacter dehalogenans (strain 2CP-1 / ATCC BAA-258).